A 195-amino-acid chain; its full sequence is PE-PGRS family protein PE_PGRS61 (195 aa).

This sequence belongs to the mycobacterial PE family. PGRS subfamily. Interacts with human TLR2.

The protein resides in the secreted. It is found in the cell wall. It localises to the cell surface. With respect to regulation, binding of Ca(2+) to PE_PGRS61 induces conformational changes and increases affinity for TLR2. Its function is as follows. Mediates Ca(2+)-dependent up-regulation of the anti-inflammatory cytokine IL-10. This Mycobacterium tuberculosis (strain ATCC 25618 / H37Rv) protein is PE-PGRS family protein PE_PGRS61.